The following is a 203-amino-acid chain: LexA repressor (203 aa).

Residues 30–50 (VREICQAVSLKSTSTVHGHLK) constitute a DNA-binding region (H-T-H motif). Catalysis depends on for autocatalytic cleavage activity residues S127 and K164.

This sequence belongs to the peptidase S24 family. Homodimer.

It carries out the reaction Hydrolysis of Ala-|-Gly bond in repressor LexA.. Represses a number of genes involved in the response to DNA damage (SOS response), including recA and lexA. In the presence of single-stranded DNA, RecA interacts with LexA causing an autocatalytic cleavage which disrupts the DNA-binding part of LexA, leading to derepression of the SOS regulon and eventually DNA repair. The sequence is that of LexA repressor from Clostridium perfringens (strain ATCC 13124 / DSM 756 / JCM 1290 / NCIMB 6125 / NCTC 8237 / Type A).